A 603-amino-acid chain; its full sequence is Sulfoacetaldehyde acetyltransferase (603 aa).

The protein belongs to the TPP enzyme family. Mg(2+) is required as a cofactor. The cofactor is thiamine diphosphate.

The enzyme catalyses acetyl phosphate + sulfite + H(+) = sulfoacetaldehyde + phosphate. In terms of biological role, catalyzes the degradation of sulfoacetaldehyde into sulfite and acetyl phosphate. Involved in sulfolactate degradation. This is Sulfoacetaldehyde acetyltransferase from Roseovarius nubinhibens (strain ATCC BAA-591 / DSM 15170 / ISM).